A 143-amino-acid polypeptide reads, in one-letter code: Small ribosomal subunit protein bS6 (143 aa).

A disordered region spans residues 96–143 (VTEASPMAAAKEERRDDRREVKKDVAAAPVEAKEDSVEEKSEEAASEE). A compositionally biased stretch (basic and acidic residues) spans 105 to 143 (AKEERRDDRREVKKDVAAAPVEAKEDSVEEKSEEAASEE).

This sequence belongs to the bacterial ribosomal protein bS6 family.

Binds together with bS18 to 16S ribosomal RNA. The chain is Small ribosomal subunit protein bS6 from Colwellia psychrerythraea (strain 34H / ATCC BAA-681) (Vibrio psychroerythus).